The following is a 310-amino-acid chain: MHMNLEAFILGCGGMVPLPHRHLTSVLLRREGELFLFDAGEGTQVSLRRLSLRWKKISAIFISHTHADHITGLPGLLMLSSQVARSEPLYIIGPPRTAEYVETSRRILDMYINYEIIVKEVIEPQVVYRGKDFQVRCFCLDHTKPCMGYTLEEQDRPGSFDPRAAQDLHVPCGALWSQLQSGVAVQSAQGVTVYPEQVMGPARPGRKVSFVTDTKYLQSIAAEVRNSDFFVCEGMFEKGMEKDAAEKKHMTCVQAATIARDARVRLMALIHYSPRYTDHELKRLLKEAQRVFPHTILSRDQLMVPIAYRE.

Residues H64, H66, D68, H69, H142, D213, and H271 each contribute to the Zn(2+) site. The active-site Proton acceptor is the D68.

This sequence belongs to the RNase Z family. In terms of assembly, homodimer. Zn(2+) is required as a cofactor.

It carries out the reaction Endonucleolytic cleavage of RNA, removing extra 3' nucleotides from tRNA precursor, generating 3' termini of tRNAs. A 3'-hydroxy group is left at the tRNA terminus and a 5'-phosphoryl group is left at the trailer molecule.. Functionally, zinc phosphodiesterase, which displays some tRNA 3'-processing endonuclease activity. Probably involved in tRNA maturation, by removing a 3'-trailer from precursor tRNA. This chain is Ribonuclease Z, found in Treponema pallidum (strain Nichols).